The following is a 143-amino-acid chain: Hemoglobin subunit alpha (143 aa).

In terms of domain architecture, Globin spans 2–143; that stretch reads RFSQDDEVLI…IVHVLISLYR (142 aa). Position 60 (histidine 60) interacts with O2. Histidine 89 is a heme b binding site.

It belongs to the globin family. As to quaternary structure, heterotetramer of two alpha chains and two beta chains. Red blood cells.

Its function is as follows. Involved in oxygen transport from the lung to the various peripheral tissues. The polypeptide is Hemoglobin subunit alpha (HBA) (Lepidosiren paradoxus (South American lungfish)).